Reading from the N-terminus, the 37-residue chain is Cytochrome b6-f complex subunit 5 (37 aa).

Residues 5–25 (LLSGIVLGMITVSAFGLFVAA) traverse the membrane as a helical segment.

It belongs to the PetG family. As to quaternary structure, the 4 large subunits of the cytochrome b6-f complex are cytochrome b6, subunit IV (17 kDa polypeptide, PetD), cytochrome f and the Rieske protein, while the 4 small subunits are PetG, PetL, PetM and PetN. The complex functions as a dimer.

The protein resides in the plastid. The protein localises to the chloroplast thylakoid membrane. Its function is as follows. Component of the cytochrome b6-f complex, which mediates electron transfer between photosystem II (PSII) and photosystem I (PSI), cyclic electron flow around PSI, and state transitions. PetG is required for either the stability or assembly of the cytochrome b6-f complex. This chain is Cytochrome b6-f complex subunit 5, found in Thalassiosira pseudonana (Marine diatom).